The chain runs to 802 residues: Peptidyl serine alpha-galactosyltransferase (802 aa).

The first 19 residues, 1–19 (MRWDLITAIVAALVVSVLA), serve as a signal peptide directing secretion. The Extracellular segment spans residues 20-750 (DESGQMAPYR…SEGRFSTLKL (731 aa)). N-linked (GlcNAc...) asparagine glycans are attached at residues N214, N275, N425, and N637. Positions 699–741 (RNCPEPGSESTEKISVSRKVGNIETKQTQGSDETKESSGSSES) are disordered. A helical membrane pass occupies residues 751–771 (WVIALWLISGVGFLVVMLLVF). Residues 772–802 (STRRGRGTTRGKGYRNKRRTSYSNTGFLDTK) are Cytoplasmic-facing. Positions 777-791 (RGTTRGKGYRNKRRT) are enriched in basic residues. Residues 777 to 802 (RGTTRGKGYRNKRRTSYSNTGFLDTK) are disordered. The segment covering 792 to 802 (SYSNTGFLDTK) has biased composition (polar residues).

The protein resides in the endoplasmic reticulum membrane. Its function is as follows. Glycosyltransferase involved in the O-galactosylation of several proteins including extensins. Catalyzes the transfer of alpha-galactosyl to Ser residues. Hydroxylation of proline residues adjacent to the serine acceptor is required for activity. This Arabidopsis thaliana (Mouse-ear cress) protein is Peptidyl serine alpha-galactosyltransferase.